The chain runs to 336 residues: Polyadenylate-binding protein-interacting protein 12 (336 aa).

Residues 14–47 are disordered; sequence EAGGLISPSPPSSVTSQESGASSNNDHGGNGIHD. A compositionally biased stretch (polar residues) spans 25 to 40; sequence SSVTSQESGASSNNDH. A PAM2-like motif is present at residues 75–85; sequence KLNPMAKEFIP. Positions 122-134 match the Bipartite nuclear localization signal motif; sequence RRKKSFGQQGKRR. RRM domains follow at residues 150 to 225 and 247 to 323; these read RTVY…PSKT and RTIY…PSKT.

In terms of assembly, interacts with MPC. Expressed in roots, leaves, stems, flowers and siliques. Detected in flowers only in growing organs: gynoecium, petals, stamenal filaments, anther walls and ovules.

It is found in the nucleus. Functionally, binds nucleotic acids in vitro. This Arabidopsis thaliana (Mouse-ear cress) protein is Polyadenylate-binding protein-interacting protein 12 (CID12).